Consider the following 279-residue polypeptide: ATP synthase gamma chain (279 aa).

The protein belongs to the ATPase gamma chain family. F-type ATPases have 2 components, CF(1) - the catalytic core - and CF(0) - the membrane proton channel. CF(1) has five subunits: alpha(3), beta(3), gamma(1), delta(1), epsilon(1). CF(0) has three main subunits: a, b and c.

The protein localises to the cell membrane. Functionally, produces ATP from ADP in the presence of a proton gradient across the membrane. The gamma chain is believed to be important in regulating ATPase activity and the flow of protons through the CF(0) complex. This is ATP synthase gamma chain from Mycoplasma pneumoniae (strain ATCC 29342 / M129 / Subtype 1) (Mycoplasmoides pneumoniae).